The chain runs to 233 residues: Protease inhibitor Egf1.0 (233 aa).

An N-terminal signal peptide occupies residues 1–28 (MYIDTGIMSNNIFLFAFFALVGLTRIEA). The 53-residue stretch at 52-104 (CRENEHYNSTRIECEEECNDRNNKLCYRFQQFCWCNEGYIRNSSHICVKLEDC) folds into the TIL domain. Residues 201–233 (FGKPKNSSAEKKPLETETQAQKFNGIIDQETLD) form a disordered region.

The protein belongs to the polydnaviridae EGF-like motif protein family. As to quaternary structure, interacts with host PAP1 and PAP3.

Its function is as follows. Counteracts the host humoral immune response by inhibiting the processing and the amidolytic activity of host PAP3. Thereby, melanization of host hemolymph, normally producing several reactive intermediates toxic for viruses, is deregulated and proper immune response cannot occur. The protein is Protease inhibitor Egf1.0 (O12) of Microplitis demolitor (Parasitoid wasp).